Here is a 280-residue protein sequence, read N- to C-terminus: Fasciclin-like arabinogalactan protein 3 (280 aa).

Positions 1 to 24 are cleaved as a signal peptide; the sequence is MGLKVSSSLLCLTILLAVSSIVSA. One can recognise an FAS1 domain in the interval 25-169; sequence VNITRVLEKY…LSVVQISMPI (145 aa). 3 N-linked (GlcNAc...) asparagine glycosylation sites follow: Asn-26, Asn-126, and Asn-159. The span at 180–193 shows a compositional bias: pro residues; that stretch reads VPPPPPMSSPPAPS. The segment at 180 to 262 is disordered; sequence VPPPPPMSSP…EPPSSASNTG (83 aa). Over residues 219-234 the composition is skewed to low complexity; the sequence is APETAPASAPSESDSP. Ser-256 carries GPI-anchor amidated serine lipidation. Positions 257 to 280 are cleaved as a propeptide — removed in mature form; sequence SASNTGLSFGAVLVLGFVASFVGF.

The protein belongs to the fasciclin-like AGP family.

It localises to the cell membrane. Its function is as follows. May be a cell surface adhesion protein. This chain is Fasciclin-like arabinogalactan protein 3 (FLA3), found in Arabidopsis thaliana (Mouse-ear cress).